A 318-amino-acid chain; its full sequence is Lipoyl synthase 1 (318 aa).

A disordered region spans residues 6-32 (DTISNPLRPRHPEKVNRPDSASPPKPD). The [4Fe-4S] cluster site is built by cysteine 60, cysteine 65, cysteine 71, cysteine 86, cysteine 90, cysteine 93, and serine 299. The 217-residue stretch at 72-288 (WDKKHATFMI…EKVAYTKGFL (217 aa)) folds into the Radical SAM core domain.

It belongs to the radical SAM superfamily. Lipoyl synthase family. It depends on [4Fe-4S] cluster as a cofactor.

The protein localises to the cytoplasm. It catalyses the reaction [[Fe-S] cluster scaffold protein carrying a second [4Fe-4S](2+) cluster] + N(6)-octanoyl-L-lysyl-[protein] + 2 oxidized [2Fe-2S]-[ferredoxin] + 2 S-adenosyl-L-methionine + 4 H(+) = [[Fe-S] cluster scaffold protein] + N(6)-[(R)-dihydrolipoyl]-L-lysyl-[protein] + 4 Fe(3+) + 2 hydrogen sulfide + 2 5'-deoxyadenosine + 2 L-methionine + 2 reduced [2Fe-2S]-[ferredoxin]. It functions in the pathway protein modification; protein lipoylation via endogenous pathway; protein N(6)-(lipoyl)lysine from octanoyl-[acyl-carrier-protein]: step 2/2. Catalyzes the radical-mediated insertion of two sulfur atoms into the C-6 and C-8 positions of the octanoyl moiety bound to the lipoyl domains of lipoate-dependent enzymes, thereby converting the octanoylated domains into lipoylated derivatives. The polypeptide is Lipoyl synthase 1 (Bradyrhizobium diazoefficiens (strain JCM 10833 / BCRC 13528 / IAM 13628 / NBRC 14792 / USDA 110)).